The following is a 415-amino-acid chain: Ornithine cyclodeaminase (415 aa).

Residues Asn241, Ala242, Asp320, Thr352, Leu354, His355, Asp373, Asp396, and Val397 each coordinate NAD(+).

Belongs to the AgrE/ArgZ ornithine cyclodeaminase family. NAD(+) serves as cofactor.

It catalyses the reaction L-ornithine = L-proline + NH4(+). Catalyzes the conversion of ornithine to proline, with the release of ammonia. The chain is Ornithine cyclodeaminase from Methanococcus maripaludis (strain DSM 14266 / JCM 13030 / NBRC 101832 / S2 / LL).